A 1036-amino-acid chain; its full sequence is Ephrin type-A receptor 6 (1036 aa).

The signal sequence occupies residues 1–22; it reads MGGCEVREFLLQFGFFLPLLTA. Residues 23–550 are Extracellular-facing; sequence WPGDCSHVSN…MAAEQGQILV (528 aa). Residues 34-212 form the Eph LBD domain; sequence QVVLLDTTTV…FYKKCPFTVR (179 aa). Fibronectin type-III domains lie at 331–441 and 442–537; these read PPSA…TDQD and APSL…TGDE. N-linked (GlcNAc...) asparagine glycosylation is found at Asn-343, Asn-397, and Asn-410. A helical membrane pass occupies residues 551–571; that stretch reads IATAAVGGFTLLVILTLFFLI. Residues 572 to 1036 are Cytoplasmic-facing; the sequence is TGRCQWYIKA…MHIQEKGFHV (465 aa). Tyr-606 and Tyr-612 each carry phosphotyrosine; by autocatalysis. Positions 631–944 constitute a Protein kinase domain; it reads IRIERVIGAG…RNPSALHTLV (314 aa). ATP-binding positions include 637–645 and Lys-663; that span reads IGAGEFGEV. The Proton acceptor role is filled by Asp-798. Residues Tyr-831 and Tyr-978 each carry the phosphotyrosine; by autocatalysis modification. The SAM domain maps to 961–1025; that stretch reads PLFVTVGDWL…VSSIQTLRLH (65 aa). The PDZ-binding signature appears at 1034-1036; the sequence is FHV.

It belongs to the protein kinase superfamily. Tyr protein kinase family. Ephrin receptor subfamily. In terms of assembly, heterotetramer upon binding of the ligand. The heterotetramer is composed of an ephrin dimer and a receptor dimer. Oligomerization is probably required to induce biological responses. Interacts (via SAM domain) with ANKS1A (via SAM domain). Expressed in brain and testis.

The protein localises to the membrane. The catalysed reaction is L-tyrosyl-[protein] + ATP = O-phospho-L-tyrosyl-[protein] + ADP + H(+). In terms of biological role, receptor tyrosine kinase which binds promiscuously GPI-anchored ephrin-A family ligands residing on adjacent cells, leading to contact-dependent bidirectional signaling into neighboring cells. The signaling pathway downstream of the receptor is referred to as forward signaling while the signaling pathway downstream of the ephrin ligand is referred to as reverse signaling. The protein is Ephrin type-A receptor 6 (EPHA6) of Homo sapiens (Human).